The chain runs to 225 residues: Small ribosomal subunit protein uS5 (225 aa).

The 64-residue stretch at 57-120 (LEEQVLDVKL…AQAKLSLIKV (64 aa)) folds into the S5 DRBM domain.

It belongs to the universal ribosomal protein uS5 family. As to quaternary structure, part of the 30S ribosomal subunit. Contacts protein S4.

In terms of biological role, with S4 and S12 plays an important role in translational accuracy. This is Small ribosomal subunit protein uS5 from Methanococcus vannielii (strain ATCC 35089 / DSM 1224 / JCM 13029 / OCM 148 / SB).